The sequence spans 119 residues: Chorion class CA protein ERA.1 (119 aa).

An N-terminal signal peptide occupies residues 1-21 (MSTFAVLLLCVQACLIQNVYS). A left arm region spans residues 22 to 55 (QCLGRVGPGGPPLGPYGGPLGGPGYGPVGYGGCG). The central domain stretch occupies residues 56 to 103 (GYGGSGIGNVAVAGELPVAGSTGVMGQVPVIGAVEFAGPACAVGSVSI). The tract at residues 104–119 (SGACGPTCGCGGSPYY) is right arm.

Belongs to the chorion protein family.

Functionally, this protein is one of many from the eggshell of the silk moth. This chain is Chorion class CA protein ERA.1 (ERA.1), found in Bombyx mori (Silk moth).